Consider the following 49-residue polypeptide: Large ribosomal subunit protein eL40 (49 aa).

This sequence belongs to the eukaryotic ribosomal protein eL40 family.

This chain is Large ribosomal subunit protein eL40, found in Methanosarcina barkeri (strain Fusaro / DSM 804).